The primary structure comprises 56 residues: Small ribosomal subunit protein uS14A (56 aa).

2 residues coordinate Zn(2+): Cys-21 and Cys-24. Residue Ser-25 is modified to Phosphoserine. Zn(2+)-binding residues include Cys-39 and Cys-42.

It belongs to the universal ribosomal protein uS14 family. As to quaternary structure, component of the small ribosomal subunit (SSU). Mature yeast ribosomes consist of a small (40S) and a large (60S) subunit. The 40S small subunit contains 1 molecule of ribosomal RNA (18S rRNA) and 33 different proteins (encoded by 57 genes). The large 60S subunit contains 3 rRNA molecules (25S, 5.8S and 5S rRNA) and 46 different proteins (encoded by 81 genes). The cofactor is Zn(2+).

The protein resides in the cytoplasm. Functionally, component of the ribosome, a large ribonucleoprotein complex responsible for the synthesis of proteins in the cell. The small ribosomal subunit (SSU) binds messenger RNAs (mRNAs) and translates the encoded message by selecting cognate aminoacyl-transfer RNA (tRNA) molecules. The large subunit (LSU) contains the ribosomal catalytic site termed the peptidyl transferase center (PTC), which catalyzes the formation of peptide bonds, thereby polymerizing the amino acids delivered by tRNAs into a polypeptide chain. The nascent polypeptides leave the ribosome through a tunnel in the LSU and interact with protein factors that function in enzymatic processing, targeting, and the membrane insertion of nascent chains at the exit of the ribosomal tunnel. This is Small ribosomal subunit protein uS14A from Saccharomyces cerevisiae (strain ATCC 204508 / S288c) (Baker's yeast).